Consider the following 333-residue polypeptide: Large ribosomal subunit protein uL3 (333 aa).

The protein belongs to the universal ribosomal protein uL3 family. Part of the 50S ribosomal subunit. Forms a cluster with proteins L14 and L24e.

In terms of biological role, one of the primary rRNA binding proteins, it binds directly near the 3'-end of the 23S rRNA, where it nucleates assembly of the 50S subunit. The sequence is that of Large ribosomal subunit protein uL3 from Methanocorpusculum labreanum (strain ATCC 43576 / DSM 4855 / Z).